A 105-amino-acid polypeptide reads, in one-letter code: Cyclotide vibi-E (105 aa).

The N-terminal stretch at 1-9 (AAFALPALA) is a signal peptide. The propeptide occupies 10–69 (SSFEKDVISFRAIQAVLEKRGLSKLEDDPVLSALAHTKTIISNPVIEEALLNGANLKAGN). The cyclopeptide (Gly-Asn) cross-link spans 70–99 (GIPCAESCVWIPCTVTALIGCGCSNKVCYN). Disulfide bonds link C73/C90, C77/C92, and C82/C97. Positions 100–105 (SLQTKY) are excised as a propeptide.

This is a cyclic peptide.

Functionally, probably participates in a plant defense mechanism. Has cytotoxic activity, active against a human lymphoma cell line with an IC(50) of 3.2 uM. In Viola biflora (Yellow wood violet), this protein is Cyclotide vibi-E.